A 382-amino-acid chain; its full sequence is uncharacterized protein (382 aa).

Residues 1-21 traverse the membrane as a helical segment; that stretch reads MKIILVVFVLIFVGVIGFNMI.

This sequence belongs to the membrane fusion protein (MFP) (TC 8.A.1) family.

It is found in the membrane. This is an uncharacterized protein from Haemophilus influenzae (strain ATCC 51907 / DSM 11121 / KW20 / Rd).